A 611-amino-acid polypeptide reads, in one-letter code: Leukotriene A-4 hydrolase (611 aa).

Lysine 73 carries the post-translational modification N6-acetyllysine. A peptide-binding positions include 135 to 137 (QCQ) and 267 to 272 (PYGGME). Histidine 296 is a binding site for Zn(2+). Glutamate 297 acts as the Proton acceptor in catalysis. Residues histidine 300 and glutamate 319 each coordinate Zn(2+). N6-acetyllysine is present on lysine 337. Tyrosine 384 acts as the Proton donor in catalysis. Lysine 414 bears the N6-acetyllysine mark. Serine 416 carries the post-translational modification Phosphoserine. 564–566 (RMK) serves as a coordination point for a peptide. At lysine 573 the chain carries N6-acetyllysine.

This sequence belongs to the peptidase M1 family. As to quaternary structure, monomer. Zn(2+) is required as a cofactor. Post-translationally, phosphorylation at Ser-416 inhibits leukotriene-A4 hydrolase activity.

The protein resides in the cytoplasm. The enzyme catalyses leukotriene A4 + H2O = leukotriene B4. It catalyses the reaction (5S,6S)-epoxy-(18R)-hydroxy-(7E,9E,11Z,14Z,16E)-eicosapentaenoate + H2O = resolvin E1. It carries out the reaction (5S,6S)-epoxy-(18S)-hydroxy-(7E,9E,11Z,14Z,16E)-eicosapentaenoate + H2O = 18S-resolvin E1. The catalysed reaction is Release of the N-terminal residue from a tripeptide.. It functions in the pathway lipid metabolism; leukotriene B4 biosynthesis. With respect to regulation, inhibited by bestatin. Inhibited by captopril. The epoxide hydrolase activity is restrained by suicide inactivation that involves binding of LTA4 to Tyr-379. 4-(4-benzylphenyl)thiazol-2-amine (ARM1) selectively inhibits the epoxide hydrolase activity. Bifunctional zinc metalloenzyme that comprises both epoxide hydrolase (EH) and aminopeptidase activities. Acts as an epoxide hydrolase to catalyze the conversion of LTA4 to the pro-inflammatory mediator leukotriene B4 (LTB4). Also has aminopeptidase activity, with high affinity for N-terminal arginines of various synthetic tripeptides. In addition to its pro-inflammatory EH activity, may also counteract inflammation by its aminopeptidase activity, which inactivates by cleavage another neutrophil attractant, the tripeptide Pro-Gly-Pro (PGP), a bioactive fragment of collagen generated by the action of matrix metalloproteinase-9 (MMP9) and prolylendopeptidase (PREPL). Involved also in the biosynthesis of resolvin E1 and 18S-resolvin E1 from eicosapentaenoic acid, two lipid mediators that show potent anti-inflammatory and pro-resolving actions. This chain is Leukotriene A-4 hydrolase (Lta4h), found in Rattus norvegicus (Rat).